A 163-amino-acid chain; its full sequence is Beta-lactoglobulin-2 (163 aa).

2 disulfide bridges follow: cysteine 66/cysteine 161 and cysteine 106/cysteine 120.

This sequence belongs to the calycin superfamily. Lipocalin family. As to quaternary structure, monomer.

It is found in the secreted. Its function is as follows. Lactoglobulin is the primary component of whey, it binds retinol and is probably involved in the transport of that molecule. The polypeptide is Beta-lactoglobulin-2 (LGB2) (Equus asinus (Donkey)).